The primary structure comprises 264 residues: Glutamate racemase (264 aa).

Residues 10–11 (DS) and 42–43 (YG) contribute to the substrate site. Residue Cys73 is the Proton donor/acceptor of the active site. 74–75 (NT) provides a ligand contact to substrate. Catalysis depends on Cys183, which acts as the Proton donor/acceptor. A substrate-binding site is contributed by 184–185 (TH).

Belongs to the aspartate/glutamate racemases family.

It carries out the reaction L-glutamate = D-glutamate. It participates in cell wall biogenesis; peptidoglycan biosynthesis. Provides the (R)-glutamate required for cell wall biosynthesis. This is Glutamate racemase from Streptococcus sanguinis (strain SK36).